The following is an 805-amino-acid chain: Acetyl-CoA decarbonylase/synthase complex subunit alpha 3 (805 aa).

[4Fe-4S] cluster contacts are provided by Cys72, Cys75, Cys76, Cys78, Cys83, and Cys93. His116 is a binding site for CO. Residues His249, Cys277, and Cys322 each coordinate [Ni-4Fe-4S] cluster. 4Fe-4S ferredoxin-type domains follow at residues 407–435 (EEFK…IPEA) and 445–474 (EYLE…LNVL). [4Fe-4S] cluster is bound by residues Cys416, Cys419, Cys422, Cys426, Cys454, Cys457, Cys460, and Cys464. Residues Cys522, Cys551, and Cys586 each coordinate [Ni-4Fe-4S] cluster.

It belongs to the Ni-containing carbon monoxide dehydrogenase family. In terms of assembly, heterotetramer of two alpha and two epsilon subunits. The ACDS complex is made up of alpha, epsilon, beta, gamma and delta subunits with a probable stoichiometry of (alpha(2)epsilon(2))(4)-beta(8)-(gamma(1)delta(1))(8). Requires [4Fe-4S] cluster as cofactor. The cofactor is [Ni-4Fe-4S] cluster.

It carries out the reaction CO + 2 oxidized [2Fe-2S]-[ferredoxin] + H2O = 2 reduced [2Fe-2S]-[ferredoxin] + CO2 + 2 H(+). It functions in the pathway one-carbon metabolism; methanogenesis from acetate. Its function is as follows. Part of the ACDS complex that catalyzes the reversible cleavage of acetyl-CoA, allowing growth on acetate as sole source of carbon and energy. The alpha-epsilon subcomponent functions as a carbon monoxide dehydrogenase. The sequence is that of Acetyl-CoA decarbonylase/synthase complex subunit alpha 3 from Methanosarcina acetivorans (strain ATCC 35395 / DSM 2834 / JCM 12185 / C2A).